The sequence spans 296 residues: MTQSTASAHKTPVVTRTAEEIQALRPQLGRLALVPTMGALHTGHRSLIAQAREHAESVAVSIFVNPLQFGPNEDYDRYPRTFDHDLRVCAEEGVDVVFAPTVDVMYPDADGDSLGQIVTVDPGSMGRVLEGEFRPGFFHGVLTVVNKLFNLIRPDVAVFGQKDAQQLAVVRRMVRDLCLPVTIVAAPTVRDPDGLATSSRNVYLSAEERASALALSKALFAGADAASSGPAAVLAAARAILSEAARATPPVSVDYLALVDPTTFTEVGDDYRGDAVLAVAAWVGETRLIDNVPLTL.

An ATP-binding site is contributed by 37-44; sequence MGALHTGH. His-44 functions as the Proton donor in the catalytic mechanism. (R)-pantoate is bound at residue Gln-68. Gln-68 contacts beta-alanine. Residue 160 to 163 participates in ATP binding; it reads GQKD. Position 166 (Gln-166) interacts with (R)-pantoate. Residues Val-189 and 197–200 each bind ATP; that span reads TSSR.

It belongs to the pantothenate synthetase family. In terms of assembly, homodimer.

It is found in the cytoplasm. The catalysed reaction is (R)-pantoate + beta-alanine + ATP = (R)-pantothenate + AMP + diphosphate + H(+). It participates in cofactor biosynthesis; (R)-pantothenate biosynthesis; (R)-pantothenate from (R)-pantoate and beta-alanine: step 1/1. Catalyzes the condensation of pantoate with beta-alanine in an ATP-dependent reaction via a pantoyl-adenylate intermediate. The protein is Pantothenate synthetase of Thermobifida fusca (strain YX).